A 216-amino-acid chain; its full sequence is Protein-L-isoaspartate O-methyltransferase (216 aa).

Ser64 is an active-site residue.

This sequence belongs to the methyltransferase superfamily. L-isoaspartyl/D-aspartyl protein methyltransferase family.

Its subcellular location is the cytoplasm. It carries out the reaction [protein]-L-isoaspartate + S-adenosyl-L-methionine = [protein]-L-isoaspartate alpha-methyl ester + S-adenosyl-L-homocysteine. Functionally, catalyzes the methyl esterification of L-isoaspartyl residues in peptides and proteins that result from spontaneous decomposition of normal L-aspartyl and L-asparaginyl residues. It plays a role in the repair and/or degradation of damaged proteins. The polypeptide is Protein-L-isoaspartate O-methyltransferase (Paracoccus denitrificans (strain Pd 1222)).